A 728-amino-acid polypeptide reads, in one-letter code: 1,4-alpha-glucan branching enzyme GlgB (728 aa).

The active-site Nucleophile is Asp-405. Glu-458 serves as the catalytic Proton donor.

The protein belongs to the glycosyl hydrolase 13 family. GlgB subfamily. Monomer.

It carries out the reaction Transfers a segment of a (1-&gt;4)-alpha-D-glucan chain to a primary hydroxy group in a similar glucan chain.. It participates in glycan biosynthesis; glycogen biosynthesis. Catalyzes the formation of the alpha-1,6-glucosidic linkages in glycogen by scission of a 1,4-alpha-linked oligosaccharide from growing alpha-1,4-glucan chains and the subsequent attachment of the oligosaccharide to the alpha-1,6 position. The sequence is that of 1,4-alpha-glucan branching enzyme GlgB from Shigella boydii serotype 4 (strain Sb227).